The following is a 490-amino-acid chain: Serine hydroxymethyltransferase (490 aa).

(6S)-5,6,7,8-tetrahydrofolate contacts are provided by residues leucine 179 and 183-185; that span reads GHL. Lysine 291 is subject to N6-(pyridoxal phosphate)lysine. Lysine 362 is covalently cross-linked (Isoglutamyl lysine isopeptide (Lys-Gln) (interchain with Q-Cter in protein Pup)).

Belongs to the SHMT family. Homodimer. It depends on pyridoxal 5'-phosphate as a cofactor.

Its subcellular location is the cytoplasm. The enzyme catalyses (6R)-5,10-methylene-5,6,7,8-tetrahydrofolate + glycine + H2O = (6S)-5,6,7,8-tetrahydrofolate + L-serine. It participates in one-carbon metabolism; tetrahydrofolate interconversion. It functions in the pathway amino-acid biosynthesis; glycine biosynthesis; glycine from L-serine: step 1/1. Catalyzes the reversible interconversion of serine and glycine with tetrahydrofolate (THF) serving as the one-carbon carrier. This reaction serves as the major source of one-carbon groups required for the biosynthesis of purines, thymidylate, methionine, and other important biomolecules. Also exhibits THF-independent aldolase activity toward beta-hydroxyamino acids, producing glycine and aldehydes, via a retro-aldol mechanism. The polypeptide is Serine hydroxymethyltransferase (Mycolicibacterium smegmatis (strain ATCC 700084 / mc(2)155) (Mycobacterium smegmatis)).